A 297-amino-acid polypeptide reads, in one-letter code: Mitochondrial thiamine pyrophosphate carrier 1 (297 aa).

3 Solcar repeats span residues 13–94 (SHVF…TNAA), 102–195 (PPTI…IRAR), and 196–295 (WPET…LMRV). 6 helical membrane-spanning segments follow: residues 19–36 (LVSGAIAGLAARSAIAPL), 75–91 (IMYIIYGSVQFGTYSYT), 109–128 (LAGAITGMASSLCSYPFDVL), 163–187 (GLGGFFHGVATSMANVTVSTAAMFG), 203–219 (TAGAISGVISRTITFPL), and 270–287 (GIGLGLLKSVPNTAINLW).

Belongs to the mitochondrial carrier (TC 2.A.29) family.

The protein resides in the mitochondrion inner membrane. In terms of biological role, mitochondrial transporter that mediates uptake of thiamine pyrophosphate (ThPP) into mitochondria. The sequence is that of Mitochondrial thiamine pyrophosphate carrier 1 (TPC1) from Vanderwaltozyma polyspora (strain ATCC 22028 / DSM 70294 / BCRC 21397 / CBS 2163 / NBRC 10782 / NRRL Y-8283 / UCD 57-17) (Kluyveromyces polysporus).